The chain runs to 124 residues: Ribonuclease pancreatic (124 aa).

A disordered region spans residues 1–23 (RESPAMKFQRQHMDSGNSPGNNP). Substrate is bound by residues lysine 7 and arginine 10. The Proton acceptor role is filled by histidine 12. Positions 14 to 23 (DSGNSPGNNP) are enriched in polar residues. 4 cysteine pairs are disulfide-bonded: cysteine 26-cysteine 84, cysteine 40-cysteine 95, cysteine 58-cysteine 110, and cysteine 65-cysteine 72. Residues 41–45 (KPVNT) and lysine 66 contribute to the substrate site. Asparagine 76 carries an N-linked (GlcNAc...) asparagine; partial glycan. Arginine 85 contributes to the substrate binding site. Histidine 119 (proton donor) is an active-site residue.

This sequence belongs to the pancreatic ribonuclease family. Monomer. Interacts with and forms tight 1:1 complexes with RNH1. Dimerization of two such complexes may occur. Interaction with RNH1 inhibits this protein. Pancreas.

The protein resides in the secreted. It carries out the reaction an [RNA] containing cytidine + H2O = an [RNA]-3'-cytidine-3'-phosphate + a 5'-hydroxy-ribonucleotide-3'-[RNA].. It catalyses the reaction an [RNA] containing uridine + H2O = an [RNA]-3'-uridine-3'-phosphate + a 5'-hydroxy-ribonucleotide-3'-[RNA].. Functionally, endonuclease that catalyzes the cleavage of RNA on the 3' side of pyrimidine nucleotides. Acts on single-stranded and double-stranded RNA. This is Ribonuclease pancreatic (RNASE1) from Balaenoptera acutorostrata (Common minke whale).